Reading from the N-terminus, the 834-residue chain is MGLFEKIFGTYSSREIKKIIPIINKIDSYEEEFKKLTDEELRNKTDEFKDMLAKGKTLDDILPEAFAVAREASARVLGMRHFREQLIGGIVLHQGRISEMKTGEGKTLVATLPAYLNALSGKGVHVITVNDYLAKRDRDQMSQLYGFLGLTTGVIVHDLDNEQRREAYNCDITYGTNNEFGFDYLRDNMVIYKEERVQRKLNFCIVDEVDSILIDEARTPLIISGEGDNSTDFYKVADFFAKTLKEDDYTVDEKTNSVILTEQGIEKAEKFFHIDNYGDGDNMQIQHHVVQALKANYTMKRDKDYMVKDNEVIIVDEFTGRLMEGRRYSDGLHQAIEAKENVKIQKESKTLATITFQNYFRMYTKLSGMTGTAQTEEAEFREIYGLDVIVIPTHRPIARIDAPDVVYKSEKAKFKAIVNEIAETYKKQQPVLVGTVSIEKSELLSDMLKRKGVPHQVLNAKYHEKEAEIISHAGEKGMVTIATNMAGRGTDIKLGEGVEEVGGLKVIGTERHESRRIDNQLRGRSGRQGDPGYSRFYVSLEDDLMRIFASDRLQGVVEKLGLTDEDAIESRMVSNAIENAQKKVEGNNFDVRKSVLQYDDVMNQQREVIYKQRSQVLEGESLKEDIQEMIRSVISEAVDAHMSGLDETLEEDLEKLLAYLQEIYLPKNVVTVDELKIKSDDEIKEILIDIAEKMYSEKEEEVTPERMREIESVILLRIVDTKWMDHIDNMDHLRQGMGLRAYRQQDPVQAYQFEGSEMFDEMINGIKTDTVKYLFHIQVEKNIERERVARETSTNINDGEGGSHEPIKRKEEKIGRNDLCPCGSGKKYKNCCGR.

Residues Q85, 103-107, and D491 contribute to the ATP site; that span reads GEGKT. A disordered region spans residues 790–809; the sequence is RETSTNINDGEGGSHEPIKR. Zn(2+) is bound by residues C820, C822, C831, and C832.

The protein belongs to the SecA family. As to quaternary structure, monomer and homodimer. Part of the essential Sec protein translocation apparatus which comprises SecA, SecYEG and auxiliary proteins SecDF. Other proteins may also be involved. Zn(2+) serves as cofactor.

The protein resides in the cell membrane. It localises to the cytoplasm. It catalyses the reaction ATP + H2O + cellular proteinSide 1 = ADP + phosphate + cellular proteinSide 2.. Its function is as follows. Part of the Sec protein translocase complex. Interacts with the SecYEG preprotein conducting channel. Has a central role in coupling the hydrolysis of ATP to the transfer of proteins into and across the cell membrane, serving as an ATP-driven molecular motor driving the stepwise translocation of polypeptide chains across the membrane. The chain is Protein translocase subunit SecA from Clostridium novyi (strain NT).